The primary structure comprises 540 residues: Gamma-cadinene synthase (540 aa).

Residues Asp292, Asp296, Asp436, Ser440, and Glu444 each coordinate Mg(2+). A DDXXD motif motif is present at residues 292-296 (DDTYD).

This sequence belongs to the terpene synthase family. The cofactor is Mg(2+). It depends on Mn(2+) as a cofactor.

The enzyme catalyses (2E,6E)-farnesyl diphosphate = (+)-gamma-cadinene + diphosphate. It functions in the pathway secondary metabolite biosynthesis; terpenoid biosynthesis. Its function is as follows. Sesquiterpene synthase that catalyzes the cyclization of trans,trans-farnesyl diphosphate (FPP) to gamma cadinene. This chain is Gamma-cadinene synthase (CDS), found in Ocimum basilicum (Sweet basil).